The sequence spans 209 residues: Uracil phosphoribosyltransferase (209 aa).

Residues R79, R104, and 131–139 (DPMLATGGS) each bind 5-phospho-alpha-D-ribose 1-diphosphate. Uracil-binding positions include I194 and 199–201 (GDA). Residue D200 participates in 5-phospho-alpha-D-ribose 1-diphosphate binding.

Belongs to the UPRTase family. It depends on Mg(2+) as a cofactor.

It carries out the reaction UMP + diphosphate = 5-phospho-alpha-D-ribose 1-diphosphate + uracil. It participates in pyrimidine metabolism; UMP biosynthesis via salvage pathway; UMP from uracil: step 1/1. With respect to regulation, allosterically activated by GTP. Catalyzes the conversion of uracil and 5-phospho-alpha-D-ribose 1-diphosphate (PRPP) to UMP and diphosphate. The protein is Uracil phosphoribosyltransferase of Streptococcus equi subsp. zooepidemicus (strain MGCS10565).